Here is a 280-residue protein sequence, read N- to C-terminus: Tryptophan 2,3-dioxygenase (280 aa).

Substrate-binding positions include 47-51, Y109, and R113; that span reads FVVQH. A heme-binding site is contributed by H236. T250 lines the substrate pocket.

The protein belongs to the tryptophan 2,3-dioxygenase family. As to quaternary structure, homotetramer. It depends on heme as a cofactor.

The catalysed reaction is L-tryptophan + O2 = N-formyl-L-kynurenine. It functions in the pathway amino-acid degradation; L-tryptophan degradation via kynurenine pathway; L-kynurenine from L-tryptophan: step 1/2. Functionally, heme-dependent dioxygenase that catalyzes the oxidative cleavage of the L-tryptophan (L-Trp) pyrrole ring and converts L-tryptophan to N-formyl-L-kynurenine. Catalyzes the oxidative cleavage of the indole moiety. The protein is Tryptophan 2,3-dioxygenase of Serratia proteamaculans (strain 568).